The chain runs to 146 residues: Prolactin-inducible protein homolog (146 aa).

Residues 1 to 28 (MRALQFLLRVSPAFLLLVLCLQLEINKA) form the signal peptide. 2 cysteine pairs are disulfide-bonded: Cys-65-Cys-91 and Cys-89-Cys-123. A glycan (N-linked (GlcNAc...) asparagine) is linked at Asn-105.

This sequence belongs to the PIP family. Monomer. Interacts with AZGP1.

Its subcellular location is the secreted. This chain is Prolactin-inducible protein homolog (PIP), found in Oryctolagus cuniculus (Rabbit).